The following is a 706-amino-acid chain: uncharacterized protein (706 aa).

Coiled coils occupy residues 86–162, 269–299, and 337–427; these read TKNV…AKKI, DYLKDVEKSIEQLSDNYEQYLSNIDIFVNEL, and DDYI…QSDY.

This is an uncharacterized protein from Staphylococcus aureus (strain MRSA252).